We begin with the raw amino-acid sequence, 349 residues long: Serine/threonine-protein kinase SRK2A (349 aa).

One can recognise a Protein kinase domain in the interval 12–268 (YELVKDIGSG…IQEIKNHEWF (257 aa)). Residues 18-26 (IGSGNFGVA) and Lys41 each bind ATP. Catalysis depends on Asp131, which acts as the Proton acceptor. Positions 151 to 177 (DFGYSKSSLLHSQPKSTVGTPAYIAPE) are activation loop.

Belongs to the protein kinase superfamily. Ser/Thr protein kinase family.

The enzyme catalyses L-seryl-[protein] + ATP = O-phospho-L-seryl-[protein] + ADP + H(+). It carries out the reaction L-threonyl-[protein] + ATP = O-phospho-L-threonyl-[protein] + ADP + H(+). With respect to regulation, activated by osmotic stress and by abscisic acid (ABA). Activation by NaCl is dependent on ABA. Functionally, involved in early responses to osmotic stress. In Physcomitrium patens (Spreading-leaved earth moss), this protein is Serine/threonine-protein kinase SRK2A.